The primary structure comprises 238 residues: Ribonuclease PH (238 aa).

Phosphate-binding positions include Arg-86 and 124–126 (GTR).

It belongs to the RNase PH family. Homohexameric ring arranged as a trimer of dimers.

The enzyme catalyses tRNA(n+1) + phosphate = tRNA(n) + a ribonucleoside 5'-diphosphate. In terms of biological role, phosphorolytic 3'-5' exoribonuclease that plays an important role in tRNA 3'-end maturation. Removes nucleotide residues following the 3'-CCA terminus of tRNAs; can also add nucleotides to the ends of RNA molecules by using nucleoside diphosphates as substrates, but this may not be physiologically important. Probably plays a role in initiation of 16S rRNA degradation (leading to ribosome degradation) during starvation. The polypeptide is Ribonuclease PH (Erwinia tasmaniensis (strain DSM 17950 / CFBP 7177 / CIP 109463 / NCPPB 4357 / Et1/99)).